The primary structure comprises 257 residues: AN1-type zinc finger protein 2B (257 aa).

2 consecutive AN1-type zinc fingers follow at residues 4–52 (PDLG…QKDI) and 94–142 (KIFT…HQTS). Zn(2+) is bound by residues cysteine 10, cysteine 15, cysteine 25, cysteine 28, cysteine 33, histidine 36, histidine 42, cysteine 44, cysteine 100, cysteine 105, cysteine 115, cysteine 118, cysteine 123, histidine 126, histidine 132, and cysteine 134. Positions 141–151 (TSRAGLAAISR) are VCP/p97-interacting motif (VIM). The interval 152–184 (AQGLASTSTAPSPSRTLPSSSSPSRATPQLPTR) is disordered. Over residues 155-179 (LASTSTAPSPSRTLPSSSSPSRATP) the composition is skewed to low complexity. Serine 163, serine 173, and serine 187 each carry phosphoserine; by MAPK14. 2 consecutive UIM domains span residues 197–216 (SEDE…AKPQ) and 221–240 (QEED…AEYQ). Residue cysteine 254 is modified to Cysteine methyl ester. A lipid anchor (S-geranylgeranyl cysteine) is attached at cysteine 254. Residues 254–257 (CSLC) carry the CAAX motif motif. Residues 255–257 (SLC) constitute a propeptide, removed in mature form.

As to quaternary structure, binds 'Lys-48'-linked polyubiquitin chains of ubiquitinated proteins. Associates with the proteasome complex; upon exposure to arsenite. Interacts (via VIM motif) with VCP; the interaction is direct. Interacts with BAG6. Interacts with IGF1R (nascent precursor form). Interacts with DERL1, FAF2, NPLOC4 and UFD1; probably through VCP. In terms of processing, phosphorylated by MAPK14. Phosphorylation has no effect on association with the proteasome complex.

It localises to the endoplasmic reticulum membrane. Its function is as follows. Plays a role in protein homeostasis by regulating both the translocation and the ubiquitin-mediated proteasomal degradation of nascent proteins at the endoplasmic reticulum. It is involved in the regulation of signal-mediated translocation of proteins into the endoplasmic reticulum. It also plays a role in the ubiquitin-mediated proteasomal degradation of proteins for which signal-mediated translocation to the endoplasmic reticulum has failed. May therefore function in the endoplasmic reticulum stress-induced pre-emptive quality control, a mechanism that selectively attenuates the translocation of newly synthesized proteins into the endoplasmic reticulum and reroutes them to the cytosol for proteasomal degradation. By controlling the steady-state expression of the IGF1R receptor, indirectly regulates the insulin-like growth factor receptor signaling pathway. The polypeptide is AN1-type zinc finger protein 2B (Mus musculus (Mouse)).